The following is a 367-amino-acid chain: Alanine racemase (367 aa).

Lys-40 acts as the Proton acceptor; specific for D-alanine in catalysis. Lys-40 carries the post-translational modification N6-(pyridoxal phosphate)lysine. A substrate-binding site is contributed by Arg-136. Tyr-263 acts as the Proton acceptor; specific for L-alanine in catalysis. A substrate-binding site is contributed by Met-310.

Belongs to the alanine racemase family. Requires pyridoxal 5'-phosphate as cofactor.

The enzyme catalyses L-alanine = D-alanine. It functions in the pathway amino-acid biosynthesis; D-alanine biosynthesis; D-alanine from L-alanine: step 1/1. Its function is as follows. Catalyzes the interconversion of L-alanine and D-alanine. May also act on other amino acids. This Lactococcus lactis subsp. lactis (strain IL1403) (Streptococcus lactis) protein is Alanine racemase (alr).